The primary structure comprises 241 residues: 7-cyano-7-deazaguanine synthase (241 aa).

9-19 (LSGGLDSSTVL) contacts ATP. Zn(2+) contacts are provided by Cys189, Cys197, Cys200, and Cys203.

This sequence belongs to the QueC family. Zn(2+) serves as cofactor.

It catalyses the reaction 7-carboxy-7-deazaguanine + NH4(+) + ATP = 7-cyano-7-deazaguanine + ADP + phosphate + H2O + H(+). It functions in the pathway purine metabolism; 7-cyano-7-deazaguanine biosynthesis. Catalyzes the ATP-dependent conversion of 7-carboxy-7-deazaguanine (CDG) to 7-cyano-7-deazaguanine (preQ(0)). This Thermoplasma volcanium (strain ATCC 51530 / DSM 4299 / JCM 9571 / NBRC 15438 / GSS1) protein is 7-cyano-7-deazaguanine synthase.